We begin with the raw amino-acid sequence, 382 residues long: Transforming growth factor beta-1 proprotein (382 aa).

Positions 1–20 (MRAVCLMLTALLMLEYVCRS) are cleaved as a signal peptide. Residues 23–68 (MSTCKSLDLELVKRKRIEAIRGQILSKLRLPKEPEIDQEGDTEEVP) are straightjacket domain. Residues 69–264 (ASLMSIYNST…SLPVERHSQL (196 aa)) are arm domain. 3 N-linked (GlcNAc...) asparagine glycosylation sites follow: N76, N116, and N125. A bowtie tail region spans residues 218–243 (GKPMEEFRFKISGMNKLRGNTETLAM). A Cell attachment site motif is present at residues 235 to 237 (RGN). 4 cysteine pairs are disulfide-bonded: C278–C286, C285–C348, C314–C379, and C318–C381.

The protein belongs to the TGF-beta family. As to quaternary structure, latency-associated peptide: Homodimer; disulfide-linked. Latency-associated peptide: Interacts with Transforming growth factor beta-1 (TGF-beta-1) chain; interaction is non-covalent and maintains (TGF-beta-1) in a latent state; each Latency-associated peptide (LAP) monomer interacts with TGF-beta-1 in the other monomer. Transforming growth factor beta-1: Homodimer; disulfide-linked. Transforming growth factor beta-1: Interacts with TGF-beta receptors (tgfbr1 and tgfbr2), leading to signal transduction. Interacts with EFEMP2. In terms of processing, transforming growth factor beta-1 proprotein: The precursor proprotein is cleaved in the Golgi apparatus to form Transforming growth factor beta-1 (TGF-beta-1) and Latency-associated peptide (LAP) chains, which remain non-covalently linked, rendering TGF-beta-1 inactive. As to expression, expressed in blood leukocytes, kidney macrophages, brain, gill and spleen but not in liver.

The protein resides in the secreted. It is found in the extracellular space. The protein localises to the extracellular matrix. Its function is as follows. Transforming growth factor beta-1 proprotein: Precursor of the Latency-associated peptide (LAP) and Transforming growth factor beta-1 (TGF-beta-1) chains, which constitute the regulatory and active subunit of TGF-beta-1, respectively. In terms of biological role, required to maintain the Transforming growth factor beta-1 (TGF-beta-1) chain in a latent state during storage in extracellular matrix. Associates non-covalently with TGF-beta-1 and regulates its activation via interaction with 'milieu molecules', such as LTBP1, LRRC32/GARP and LRRC33/NRROS, that control activation of TGF-beta-1. Interaction with integrins (ITGAV:ITGB6 or ITGAV:ITGB8) results in distortion of the Latency-associated peptide chain and subsequent release of the active TGF-beta-1. Transforming growth factor beta-1: Multifunctional protein that regulates the growth and differentiation of various cell types and is involved in various processes, such as normal development, immune function, microglia function and responses to neurodegeneration. Activation into mature form follows different steps: following cleavage of the proprotein in the Golgi apparatus, Latency-associated peptide (LAP) and Transforming growth factor beta-1 (TGF-beta-1) chains remain non-covalently linked rendering TGF-beta-1 inactive during storage in extracellular matrix. At the same time, LAP chain interacts with 'milieu molecules', such as ltbp1, lrrc32/garp and lrrc33/nrros that control activation of TGF-beta-1 and maintain it in a latent state during storage in extracellular milieus. TGF-beta-1 is released from LAP by integrins (ITGAV:ITGB6 or ITGAV:ITGB8): integrin-binding to LAP stabilizes an alternative conformation of the LAP bowtie tail and results in distortion of the LAP chain and subsequent release of the active TGF-beta-1. Once activated following release of LAP, TGF-beta-1 acts by binding to TGF-beta receptors (tgfbr1 and tgfbr2), which transduce signal. While expressed by many cells types, TGF-beta-1 only has a very localized range of action within cell environment thanks to fine regulation of its activation by Latency-associated peptide chain (LAP) and 'milieu molecules'. Plays an important role in bone remodeling: acts as a potent stimulator of osteoblastic bone formation. Can promote either T-helper 17 cells (Th17) or regulatory T-cells (Treg) lineage differentiation in a concentration-dependent manner. Can induce epithelial-to-mesenchymal transition (EMT) and cell migration in various cell types. The chain is Transforming growth factor beta-1 proprotein (tgfb1) from Oncorhynchus mykiss (Rainbow trout).